We begin with the raw amino-acid sequence, 547 residues long: MFS-type transporter ltbE (547 aa).

A disordered region spans residues 1-23; that stretch reads MEIAAETTGPAGVTTDVTNAEES. 13 helical membrane passes run 33 to 53, 74 to 94, 104 to 124, 135 to 155, 165 to 185, 195 to 215, 240 to 260, 267 to 287, 310 to 330, 343 to 363, 370 to 390, 399 to 419, and 432 to 452; these read QGWA…VLAI, DIGW…PTCG, WVYC…AVAP, ISGL…SYCV, PIVL…GGSI, FIFW…WFTL, ATLL…GGIV, KVFG…CLQW, GFMM…PIYF, INLL…GSLA, VPFM…YQLV, WIGF…MPIL, and TGLV…PSVG. Asn-463 carries N-linked (GlcNAc...) asparagine glycosylation. The helical transmembrane segment at 506-526 threads the bilayer; the sequence is VFWVGVATPALAWIASWAMEW.

This sequence belongs to the major facilitator superfamily. TCR/Tet family.

It is found in the cell membrane. MFS-type transporter; part of the gene cluster that mediates the biosynthesis of luteodienoside A, a glycosylated polyketide consisting of an unusual 1-O-beta-D-glucopyranosyl-myo-inositol (glucinol) ester of 3-hydroxy-2,2,4-trimethylocta-4,6-dienoic acid. LtbE is probably involved in the secretion of luteodienoside A. The chain is MFS-type transporter ltbE from Aspergillus luteorubrus.